The sequence spans 512 residues: MESVIFSINGEIIQVNKEIITASPYNFFKRIQDHHLKDEAIILNGINYHAFESLLDYIRWKKINITINNVEMILVAAIIIDVPPVVDLCVKTMIHNINSTNCIRMFNFSKQYGIKKLYNASMSEIINNITAVTSDPEFGKLSKDELTTILSHEDVNVNHEDVTAMILLKWIHKNPNDVDIINILHPKFMTNTMRNAISLLGLTISKSTKPVTRNGIKHNIVVIKNSDYISTITHYSPRTEYWTIVGNTDRQFYNANVLHNCLYIIGGMINNRHVYSVSRVDLETKKWKTVTNMSSLKSEVSTCVNNGKLYVIGGLEFSISTGVAEYLKHGTSKWIRLPNLITPRYSGASVFVNDDIYVMGGVYTTYEKYVVLNDVECFTKNRWIKKSPMPRHHSIVYAVEYDGDIYVITGITHETRNYLYKYIVKEDKWIELYMYFNHVGKMFVCSCGDYILIIADAKYEYYPKSNTWNLFDMSTRNIEYYDMFTKDETPKCNVTHKSLPSFLSNCEKQFLQ.

The 66-residue stretch at 2–67 (ESVIFSINGE…IRWKKINITI (66 aa)) folds into the BTB domain. 6 Kelch repeats span residues 216 to 261 (IKHN…LHNC), 262 to 307 (LYII…VNNG), 309 to 354 (LYVI…FVND), 356 to 403 (IYVM…EYDG), 405 to 449 (IYVI…SCGD), and 452 to 498 (LIIA…THKS).

The protein belongs to the poxviruses Kelch family.

The sequence is that of Kelch repeat protein C2 from Homo sapiens (Human).